We begin with the raw amino-acid sequence, 324 residues long: MIRLRSAAARDRCQVLSLAYRITVAGRCQTVSPHHRQAKVSEQPSLAKEIAITSTDATADTPRTSPPSDTAGTTSRHRGFGIDIGGSSIKGGIVDLDIGQLIGDRIKLLTPQPATPLAVAKTIAEVVNAFGWTAPLGVTYPGVVTQGVVRTAANVDDSWIGTNARDIISAELNSQEVTILNDADAAGLAEGRYGAGKNNSGLIVLLTFGTGIGSAVIHNGKLIPNTEFGHLEVDGKEAEQRAASSVKDKYKWSYRTWAKQVTRVLVAIENAMCPDLFIAGGGISRKADRWIPLLENRTPMVAAALQNTAGIVGAAMASTADVTH.

Residues 53-79 (TSTDATADTPRTSPPSDTAGTTSRHRG) are disordered. Polar residues predominate over residues 62–74 (PRTSPPSDTAGTT). 83-88 (DIGGSS) is a binding site for ATP.

This sequence belongs to the ROK (NagC/XylR) family. Homodimer.

It catalyses the reaction [phosphate](n) + D-glucose = [phosphate](n-1) + D-glucose 6-phosphate + H(+). The enzyme catalyses D-glucose + ATP = D-glucose 6-phosphate + ADP + H(+). In terms of biological role, catalyzes the phosphorylation of glucose using polyphosphate or ATP as the phosphoryl donor. The protein is Polyphosphate glucokinase (ppgK) of Mycobacterium leprae (strain TN).